Reading from the N-terminus, the 484-residue chain is MRRMMPAAPPQGASPPPSYESVVGSSLTEPLYVPPRYLGPTEGRNSIRYSQLPPLYDTTKIYLIDNKSADIASLNYQNNHSDFLTSVVQNSDFTPMEASTQTINLDERSRWGGEFKSILTTNIPNVTQYMFSNSFRVRLMSARDKETNAPTYEWFTLTLPEGNFSDIAVIDLMNNAIVENYLAVGRQQGVKEEDIGVKIDTRNFRLGYDPETKLVMPGSYTNMAFHPDVVLAPGCAIDFTFSRLNNLLGIRKRYPYQEGFMLTYEDLAGGNIPALLDLTTYDQENSSTIKPLKQDSKGRSYHVGEDPEAGDTFTYYRSWYLAYNYGDPATGTASQTLLVSPDVTCGVEQVYWSLPDLMQDPVTFRPSQTPSNYPVVATELLPLRSRAFYNTQAVYSQLLQQATNNTLVFNRFPENQILLRPPESTITSISENVPSLTDHGTLPLRNSIPGVQRVTVTDARRRVCPYVYKSLGVVTPRVLSSRTF.

Positions M1–G24 are disordered. The segment covering A7 to S18 has biased composition (pro residues).

The protein belongs to the adenoviridae penton family. In terms of assembly, interacts with the fiber protein (via N-terminal tail region). Interacts with the capsid vertex protein; this interaction binds the penton base to neighboring peripentonal hexons.

The protein resides in the virion. It localises to the host nucleus. Functionally, major capsid protein that self-associates to form penton base pentamers, each in the shape of a pentagon, situated at the 12 vertices of the pseudo T=25 capsid. Involved in virus secondary attachment to host cell after initial attachment by the fiber protein, and in endocytosis of virions. As the virus enters the host cell, penton proteins are shed concomitant with virion acidification in the endosome. This chain is Penton protein, found in Sus scrofa (Pig).